A 328-amino-acid chain; its full sequence is UPF0194 membrane protein YE2891 (328 aa).

The N-terminal stretch at 1-22 (MNRKKIIVAVVIVALLAAIGYG) is a signal peptide. 2 coiled-coil regions span residues 80-109 (YVNA…REEE) and 139-208 (ANKA…TTLL).

The protein belongs to the UPF0194 family.

It localises to the periplasm. The protein is UPF0194 membrane protein YE2891 of Yersinia enterocolitica serotype O:8 / biotype 1B (strain NCTC 13174 / 8081).